The sequence spans 102 residues: Small ribosomal subunit protein bS6 (102 aa).

It belongs to the bacterial ribosomal protein bS6 family.

Functionally, binds together with bS18 to 16S ribosomal RNA. The chain is Small ribosomal subunit protein bS6 from Desulfovibrio desulfuricans (strain ATCC 27774 / DSM 6949 / MB).